The primary structure comprises 355 residues: Thiamine thiazole synthase, chloroplastic (355 aa).

The transit peptide at 1–42 directs the protein to the chloroplast; that stretch reads MAAMATTASSLLKTSFAGARLPAAARNPTVSVAPRTGGAICN. Substrate contacts are provided by residues A96, 116 to 117, G124, and V189; that span reads EQ. C218 is subject to 2,3-didehydroalanine (Cys). Residues D220, H235, M287, and 297 to 299 contribute to the substrate site; that span reads RMG.

The protein belongs to the THI4 family. In terms of assembly, homooctamer. Fe cation is required as a cofactor. In terms of processing, during the catalytic reaction, a sulfide is transferred from Cys-218 to a reaction intermediate, generating a dehydroalanine residue.

The protein resides in the plastid. It localises to the chloroplast. It carries out the reaction [ADP-thiazole synthase]-L-cysteine + glycine + NAD(+) = [ADP-thiazole synthase]-dehydroalanine + ADP-5-ethyl-4-methylthiazole-2-carboxylate + nicotinamide + 3 H2O + 2 H(+). In terms of biological role, involved in biosynthesis of the thiamine precursor thiazole. Catalyzes the conversion of NAD and glycine to adenosine diphosphate 5-(2-hydroxyethyl)-4-methylthiazole-2-carboxylic acid (ADT), an adenylated thiazole intermediate. The reaction includes an iron-dependent sulfide transfer from a conserved cysteine residue of the protein to a thiazole intermediate. The enzyme can only undergo a single turnover, which suggests it is a suicide enzyme. May have additional roles in adaptation to various stress conditions and in DNA damage tolerance. Required fot thiamine accumulation and disease resistance toward the bacterial pathogen Xanthomonas oryzae pv oryzae (Xoo) and the fungal pathogen Magnaporthe oryzae. During infection by Xoo, functions positively in the defense pathway initiated by the resistance genes XA3 and XA26 by promoting thiamine synthesis. May function upstream of the defense-related proteins peroxidases, phenylalanine ammonia-lyases and pathogenesis-related proteins. (Microbial infection) During infection by Xanthomonas oryzae pv oryzae (Xoo), THI1 interacts with the type III effector virulence factor xadA from Xoo, which is an adhesin-like outer membrane protein. This probably attenuates the function of THI1 in defense response. This Oryza sativa subsp. japonica (Rice) protein is Thiamine thiazole synthase, chloroplastic.